The primary structure comprises 397 residues: Na(+)/H(+) antiporter NhaA 2 (397 aa).

11 helical membrane passes run 9–29 (LHNPAASGILIFLAAVAAMAV), 59–79 (LLLWINDGLMAVFFLLVGLEL), 95–115 (ILPVVGAVGGIALPAAIYTLI), 125–145 (GWAIPTATDIAFALGILALLG), 154–174 (LFLLTLAIIDDLAAILIIAFF), 177–197 (SELSPASLMIAGSAIGTLILM), 222–242 (SGVHATLAGVVLGFVIPLKGE), 260–280 (VVGLGILPLFAFANAGVSLQG), 292–312 (LGIALGLFLGKQIGVFGFVWL), 332–352 (GVALLCGVGFTMSLFISSLAF), and 371–391 (LGILTGSILSGIFGYILLRFS).

It belongs to the NhaA Na(+)/H(+) (TC 2.A.33) antiporter family.

The protein localises to the cell inner membrane. It carries out the reaction Na(+)(in) + 2 H(+)(out) = Na(+)(out) + 2 H(+)(in). In terms of biological role, na(+)/H(+) antiporter that extrudes sodium in exchange for external protons. This chain is Na(+)/H(+) antiporter NhaA 2, found in Magnetococcus marinus (strain ATCC BAA-1437 / JCM 17883 / MC-1).